The chain runs to 554 residues: Malate synthase 1 (554 aa).

Arg177 functions as the Proton acceptor in the catalytic mechanism. Asp457 acts as the Proton donor in catalysis. The SKL peroxisome targeting motif signature appears at Ser552–Leu554.

This sequence belongs to the malate synthase family. Interacts with PEX9.

It is found in the peroxisome matrix. It carries out the reaction glyoxylate + acetyl-CoA + H2O = (S)-malate + CoA + H(+). It participates in carbohydrate metabolism; glyoxylate cycle; (S)-malate from isocitrate: step 2/2. Its function is as follows. Malate synthase which takes part in the glyoxylate cycle. MLS1 activity is essential for cells to grow on oleic acid as a sole carbon source. Two steps of the glyoxylate cycle take place in the cytosol, the splitting of isocitrate into succinate and glyoxylate, and the dehydrogenation of malate to oxaloacetate. However, the formation of malate from glyoxylate and acetyl-CoA undertaken MLS1, occurs in the peroxisomes when cells are grown on oleic acid. The source of acetyl-CoA being either peroxisomal when breaking down fatty acids, or cytosolic when extra-cellular two-carbon substrates are used, therefore, although not strictly essential, the peroxisomal localization of MLS1 appears to be advantageous for cells growing on oleic acid, in that acetyl-CoA production and utilization are thereby intimately compartmentalized together to increase efficiency. This Saccharomyces cerevisiae (strain YJM789) (Baker's yeast) protein is Malate synthase 1.